A 208-amino-acid polypeptide reads, in one-letter code: MDPFLVLLHSVSSSLSSSELTELKFLCLGRVGKRKLERVQSGLDLFSMLLEQNDLEPGHTELLRELLASLRRHDLLRRVDDFEAGAAAGAAPGEEDLCAAFNVICDNVGKDWRRLARQLKVSDTKIDSIEDRYPRNLTERVRESLRIWKNTEKENATVAHLVGALRSCQMNLVADLVQEVQQARDLQNRSGAMSPMSWNSDASTSEAS.

Residues P3–D81 form the DED domain. The Death domain maps to L97–Q181. Residue R117 is glycosylated ((Microbial infection) N-beta-linked (GlcNAc) arginine). Residues Q187 to S208 are disordered. A Phosphoserine modification is found at S194.

As to quaternary structure, can self-associate. Component of the AIM2 PANoptosome complex, a multiprotein complex that drives inflammatory cell death (PANoptosis). Component of the death-induced signaling complex (DISC) composed of cell surface receptor FAS/CD95 or TNFRSF1A, adapter protein FADD and the CASP8 protease; recruitment of CASP8 to the complex is required for processing of CASP8 into the p18 and p10 subunits. Interacts (via death domain) with FAS (via death domain). Interacts directly (via DED domain) with NOL3 (via CARD domain); inhibits death-inducing signaling complex (DISC) assembly by inhibiting the increase in FAS-FADD binding induced by FAS activation. Interacts with CFLAR, PEA15 and MBD4. When phosphorylated, part of a complex containing HIPK3 and FAS. May interact with MAVS/IPS1. Interacts with MOCV v-CFLAR protein and PIDD1. Interacts with RIPK1 and TRADD. Interacts with stimulated TNFRSF10B. Interacts with DDX24. In terms of assembly, (Microbial infection) Interacts with human papillomavirus 16/HPV16 protein E6. (Microbial infection) Interacts with molluscum contagiosum virus proteins MC159L/v-CFLAR and MC160L. In terms of processing, (Microbial infection) Glycosylated at Arg-117 by enteropathogenic E.coli protein NleB1, C.rodentium protein NleB and S.typhimurium protein Ssek1: arginine GlcNAcylation prevents recruitment of caspase-8 or caspase-10 to the activated Fas (CD95) or TNFR-1 receptors. In terms of tissue distribution, expressed in a wide variety of tissues, except for peripheral blood mononuclear leukocytes.

The protein localises to the cytoplasm. In terms of biological role, apoptotic adapter molecule that recruits caspases CASP8 or CASP10 to the activated FAS/CD95 or TNFRSF1A/TNFR-1 receptors. The resulting aggregate called the death-inducing signaling complex (DISC) performs CASP8 proteolytic activation. Active CASP8 initiates the subsequent cascade of caspases mediating apoptosis. Involved in interferon-mediated antiviral immune response, playing a role in the positive regulation of interferon signaling. This chain is FAS-associated death domain protein, found in Homo sapiens (Human).